We begin with the raw amino-acid sequence, 223 residues long: MADSEEQEDYKMQAFDADIQNLLKTALKEPGNVDLEKAANVIADQSLRDTTFSREAGRMCYTIIQAESKQTGRTMFRSSLLNRLQVEYKNRKETRARSLQEWVCYVGFMCNVFDYLRVNNMPMLALVHPVYDCLFDLVQPESLKREEEVDCLVLQLHRVGEQLEKMNCQRMDDLFSQLRDSFLLQGGLSSLTQLLLLEMIEYRAAGWRMTDAAQNYYYSEVSD.

Residues Q7–G206 enclose the MIF4G domain.

Belongs to the MIF4GD family. As to quaternary structure, interacts with eif4g1, eif4g2 and slbp; probably tethered by SLBP to the 3'-end of mRNAs ending with the histone stem-loop, it also interacts with eif4g1 which is bound to their 5'-end.

The protein resides in the cytoplasm. The protein localises to the nucleus. In terms of biological role, functions in replication-dependent translation of histone mRNAs which differ from other eukaryotic mRNAs in that they do not end with a poly-A tail but a stem-loop. May participate in circularizing those mRNAs specifically enhancing their translation. This Xenopus laevis (African clawed frog) protein is MIF4G domain-containing protein A (mif4gd-a).